The chain runs to 228 residues: L-ribulose-5-phosphate 4-epimerase UlaF (228 aa).

Substrate-binding positions include 26–27 (GN), 43–44 (SG), and 72–73 (SS). Zn(2+) contacts are provided by aspartate 74, histidine 93, and histidine 95. Aspartate 118 acts as the Proton donor/acceptor in catalysis. Histidine 167 lines the Zn(2+) pocket. Tyrosine 225 (proton donor/acceptor) is an active-site residue.

It belongs to the aldolase class II family. AraD/FucA subfamily. Zn(2+) serves as cofactor.

It carries out the reaction L-ribulose 5-phosphate = D-xylulose 5-phosphate. Its pathway is cofactor degradation; L-ascorbate degradation; D-xylulose 5-phosphate from L-ascorbate: step 4/4. Functionally, catalyzes the isomerization of L-ribulose 5-phosphate to D-xylulose 5-phosphate. Is involved in the anaerobic L-ascorbate utilization. The sequence is that of L-ribulose-5-phosphate 4-epimerase UlaF from Escherichia fergusonii (strain ATCC 35469 / DSM 13698 / CCUG 18766 / IAM 14443 / JCM 21226 / LMG 7866 / NBRC 102419 / NCTC 12128 / CDC 0568-73).